We begin with the raw amino-acid sequence, 950 residues long: MQLLLKSIFTCALFVIFVYATAQSLLKVQETEARQAYLNVTSSSSSNLSQDDGHFLSRRLRQVSHGEEGDEGAPSQMDDELEQMTKVHGEAPDAEELRECSEGLVLPLWMPQRNISVGDRLVRGFVYFVLLIYLFVGVSIIADRFMAAIEAITSIERAVVVKGPNNTKQVMHVRIWNETVANLTLMALGSSAPEILLSVIEIYAKDFESGDLGPGTIVGSAAYNLFMIIAVCMIWIPAGEVRRIRHLRVFFVTALFSVFAYVWLWLILSVFTPGVILVWEAIVTLLFFPLTVLWAYIAERRLLVYKYMDKNYRVNKRGTVVAGEHDQVEMDAEKGPKQPMVTSARGNDAEAFDEARREYITLLTELRQKYPDADLEQLEMMAQEQVLARSSKSRAFYRIQATRKMVGSGNLMRKIQERAHSDLTEVKAQLHAGDDEEADDPIRMYFEPGHYTVMENCGEFEVRVVRRGDISTYASVEYETQDGTASAGTDFVGRKGLLSFPPGVDEQRFRIEVIDDDVFEEDECFYIRLFNPSEGVKLAVPMIATVMILDDDHAGIFAFTDSVFEITESVGRFELKVMRYSGARGTVIVPYWTENDTATESKDYEGARGELVFENNESEKFIDLFILEESSYEKDVSFKVHIGEPRLAPDDELAAKIKEVEKKPVQDLTELDRILLLSKPRNGELTTAYVRIRESQEFKATVDKLVAKANVSAVLGTSSWKEQFKDALTVIPADESEFDNDDEEEEVPSCFSYVSHFVCLFWKVLFAFVPPTDICGGYVTFVVSIFVIGVITAIIGDAASYFGCALNIKDSVTAILFVALGTSIPDTFASMIAAKHDEGADNCIGNVTGSNAVNVFLGIGLAWTIAAVYHSSHGMTFNVEPGTIGFAVALFCGEALIAIMLIMFRRWHKGIGAELGGPKVSKYISAAILVFLWVFYVVICILEAYDVIRV.

The N-terminal stretch at 1-22 (MQLLLKSIFTCALFVIFVYATA) is a signal peptide. Over 23–120 (QSLLKVQETE…PQRNISVGDR (98 aa)) the chain is Extracellular. Asn39, Asn47, and Asn114 each carry an N-linked (GlcNAc...) asparagine glycan. Residues 121–141 (LVRGFVYFVLLIYLFVGVSII) traverse the membrane as a helical segment. Residues 142 to 179 (ADRFMAAIEAITSIERAVVVKGPNNTKQVMHVRIWNET) lie on the Cytoplasmic side of the membrane. Residues 180 to 200 (VANLTLMALGSSAPEILLSVI) traverse the membrane as a helical segment. Residues 201 to 216 (EIYAKDFESGDLGPGT) lie on the Extracellular side of the membrane. Residues 217–237 (IVGSAAYNLFMIIAVCMIWIP) traverse the membrane as a helical segment. The Cytoplasmic portion of the chain corresponds to 238–257 (AGEVRRIRHLRVFFVTALFS). The next 2 membrane-spanning stretches (helical) occupy residues 258 to 278 (VFAYVWLWLILSVFTPGVILV) and 279 to 299 (WEAIVTLLFFPLTVLWAYIAE). Residues 300-749 (RRLLVYKYMD…NDDEEEEVPS (450 aa)) lie on the Cytoplasmic side of the membrane. The segment at 301–318 (RLLVYKYMDKNYRVNKRG) is corresponds to the exchanger inhibitory peptide (XIP) found in other sodium/calcium exchange proteins and thought to be involved in calmodulin binding. Residues 440 to 551 (DPIRMYFEPG…MIATVMILDD (112 aa)) form the Calx-beta 1 domain. Residues Glu455, Asp490, Asp515, Asp516, Val518, Glu520, Glu523, Asp550, Asp551, and Asp552 each contribute to the Ca(2+) site. A Calx-beta 2 domain is found at 555-694 (GIFAFTDSVF…LTTAYVRIRE (140 aa)). The chain crosses the membrane as a helical span at residues 750–770 (CFSYVSHFVCLFWKVLFAFVP). The Extracellular segment spans residues 771–775 (PTDIC). The helical transmembrane segment at 776–796 (GGYVTFVVSIFVIGVITAIIG) threads the bilayer. The Cytoplasmic portion of the chain corresponds to 797 to 813 (DAASYFGCALNIKDSVT). A helical transmembrane segment spans residues 814 to 834 (AILFVALGTSIPDTFASMIAA). Residues 835–848 (KHDEGADNCIGNVT) are Extracellular-facing. An N-linked (GlcNAc...) asparagine glycan is attached at Asn846. Residues 849-869 (GSNAVNVFLGIGLAWTIAAVY) form a helical membrane-spanning segment. At 870 to 883 (HSSHGMTFNVEPGT) the chain is on the cytoplasmic side. The chain crosses the membrane as a helical span at residues 884-904 (IGFAVALFCGEALIAIMLIMF). The Extracellular portion of the chain corresponds to 905–923 (RRWHKGIGAELGGPKVSKY). Residues 924 to 944 (ISAAILVFLWVFYVVICILEA) traverse the membrane as a helical segment. Topologically, residues 945 to 950 (YDVIRV) are cytoplasmic.

It belongs to the Ca(2+):cation antiporter (CaCA) (TC 2.A.19) family. SLC8 subfamily. Ubiquitously expressed with higher expression in head compared to body (at protein level). Enriched in photoreceptor cells of the eye (at protein level). In the adult head, expressed in retina, optic ganglia and all neuronal tissues.

The protein localises to the cell membrane. Its subcellular location is the cell projection. It localises to the rhabdomere membrane. The catalysed reaction is Ca(2+)(in) + 3 Na(+)(out) = Ca(2+)(out) + 3 Na(+)(in). Activated by a Na(+) electrochemical gradient but also undergoes Na(2+)-dependent inactivation. Inhibited by micromolar levels of cytoplasmic Ca(2+), which is the opposite of most characterized mammalian homologs. Its activity is regulated as follows. Exhibits greater extent of inhibition by Ca(2+) than isoform D/1.2. With respect to regulation, exhibits greater Na(2+)-dependent inactivation than isoform A/1.1, probably due to greater stability of the inactive Na(2+)-bound form. Functionally, na(+)/Ca(2+) antiporter that couples the energy of a Na(+) electrochemical gradient to the movement of Ca(2+) against an electrochemical gradient across a membrane, which contributes to the regulation of cytoplasmic Ca(2+) levels. Mediates Na(+)/Ca(2+) exchange in photoreceptor cells and involved in controlling Ca(2+) levels during phototransduction, affecting magnitude of the photoresponse, activation kinetics, signal amplification, response termination, and light adaptation. Light induced depolarization of photoreceptor cells, resulting in Na(+) and Ca(2+) entry through trp/transient receptor potential protein channels, is essential for photoreceptor cell function but may result in toxic levels of cytoplasmic Ca(2+). Na(+)/Ca(2+) antiporter regulation of Ca(2+) levels protects photoreceptor cells from light-dependent retinal degeneration. This Drosophila melanogaster (Fruit fly) protein is Sodium/calcium exchanger Calx.